The primary structure comprises 239 residues: tRNA (guanine-N(7)-)-methyltransferase (239 aa).

S-adenosyl-L-methionine-binding residues include Glu-68, Glu-93, Asp-120, and Asp-143. The active site involves Asp-143. Residues Lys-147, Asp-180, and 217 to 220 (TKFE) each bind substrate.

Belongs to the class I-like SAM-binding methyltransferase superfamily. TrmB family.

It carries out the reaction guanosine(46) in tRNA + S-adenosyl-L-methionine = N(7)-methylguanosine(46) in tRNA + S-adenosyl-L-homocysteine. Its pathway is tRNA modification; N(7)-methylguanine-tRNA biosynthesis. Functionally, catalyzes the formation of N(7)-methylguanine at position 46 (m7G46) in tRNA. The protein is tRNA (guanine-N(7)-)-methyltransferase of Vibrio parahaemolyticus serotype O3:K6 (strain RIMD 2210633).